The following is a 398-amino-acid chain: Inner membrane protein YjgN (398 aa).

At Met1–Tyr24 the chain is on the cytoplasmic side. A helical membrane pass occupies residues Phe25–Trp45. Residues Ala46–Asn73 are Periplasmic-facing. A helical transmembrane segment spans residues Val74–Ala94. Position 95 (Asp95) is a topological domain, cytoplasmic. A helical transmembrane segment spans residues Met96–Ala116. Topologically, residues Lys117–Phe142 are periplasmic. A helical transmembrane segment spans residues Trp143–Ile163. Residues Ser164–Ser175 are Cytoplasmic-facing. Residues Val176–Gly196 traverse the membrane as a helical segment. Topologically, residues Thr197–Lys228 are periplasmic. Residues Tyr229–Phe249 traverse the membrane as a helical segment. At Asp250 to Lys278 the chain is on the cytoplasmic side. Residues Met279–Val299 form a helical membrane-spanning segment. Over Ser300–Ala333 the chain is Periplasmic. The helical transmembrane segment at Leu334–Ile354 threads the bilayer. Residues Asp355–Leu398 lie on the Cytoplasmic side of the membrane.

The protein resides in the cell inner membrane. This Escherichia coli (strain K12) protein is Inner membrane protein YjgN (yjgN).